The following is a 336-amino-acid chain: COP9 signalosome complex subunit 5 (336 aa).

An MPN domain is found at 44–181 (VRISSVAMIK…IGAFRTIPEG (138 aa)). 3 residues coordinate Zn(2+): H127, H129, and D140. The JAMM motif motif lies at 127 to 140 (HSHPGYGCWLSGID).

This sequence belongs to the peptidase M67A family. CSN5 subfamily. In terms of assembly, component of the COP9 signalosome (CSN) complex.

The protein localises to the cytoplasm. Its subcellular location is the nucleus. Functionally, catalytic component of the COP9 signalosome (CSN) complex that acts as an regulator of the ubiquitin (Ubl) conjugation pathway by mediating the deneddylation of the cullin subunit of SCF-type E3 ubiquitin-protein ligase complexes. The CSN complex is involved in the regulation of the circadian clock through its control of the stability of the SCF(FWD-1) complex. The chain is COP9 signalosome complex subunit 5 (csn-5) from Neurospora crassa (strain ATCC 24698 / 74-OR23-1A / CBS 708.71 / DSM 1257 / FGSC 987).